An 803-amino-acid chain; its full sequence is Protein AMEIOTIC 1 homolog (803 aa).

Disordered regions lie at residues 21–64 (RPQV…QSLS) and 264–333 (RLRQ…RWSA). The segment covering 39–50 (NGKDDANHDESK) has biased composition (basic and acidic residues). Residues 51 to 64 (NQSPGLPLSRQSLS) are compositionally biased toward polar residues. A compositionally biased stretch (basic and acidic residues) spans 283–295 (KREEAESSMDKSR). Positions 296 to 313 (AARKKKAKTYKSPKKVEK) are enriched in basic residues. Over residues 314-333 (RRVVEAKDGDPRRGKDRWSA) the composition is skewed to basic and acidic residues. Residues 450–567 (VKKKVEELAE…SSFLSLKEQL (118 aa)) are a coiled coil. Residues 651-688 (ISGGGSSSCPVASGPEQLPRSSSCPSIGPGGLPPSSRA) are disordered.

The protein localises to the nucleus. It localises to the chromosome. Functionally, plays a fundamental role in building the proper chromosome structure at the beginning of meiosis in male meiocytes. Required for the transition from leptotene to zygotene in meiocytes. Required for homologous chromosome pairing. The polypeptide is Protein AMEIOTIC 1 homolog (Oryza sativa subsp. japonica (Rice)).